Consider the following 457-residue polypeptide: UDP-N-acetylmuramoylalanine--D-glutamate ligase (457 aa).

126–132 (GTAGKGS) lines the ATP pocket.

Belongs to the MurCDEF family.

It localises to the cytoplasm. It carries out the reaction UDP-N-acetyl-alpha-D-muramoyl-L-alanine + D-glutamate + ATP = UDP-N-acetyl-alpha-D-muramoyl-L-alanyl-D-glutamate + ADP + phosphate + H(+). The protein operates within cell wall biogenesis; peptidoglycan biosynthesis. Cell wall formation. Catalyzes the addition of glutamate to the nucleotide precursor UDP-N-acetylmuramoyl-L-alanine (UMA). The protein is UDP-N-acetylmuramoylalanine--D-glutamate ligase of Deinococcus radiodurans (strain ATCC 13939 / DSM 20539 / JCM 16871 / CCUG 27074 / LMG 4051 / NBRC 15346 / NCIMB 9279 / VKM B-1422 / R1).